Reading from the N-terminus, the 564-residue chain is Mercuric reductase (564 aa).

In terms of domain architecture, HMA spans 1 to 65 (MSTLKITGMT…AVAGLGYRAT (65 aa)). A metal cation-binding residues include C11 and C14. Positions 109, 129, and 134 each coordinate FAD. An intrachain disulfide couples C135 to C140. 4 residues coordinate FAD: K144, A210, D406, and V414. Hg(2+) is bound by residues C561 and C562.

The protein belongs to the class-I pyridine nucleotide-disulfide oxidoreductase family. Homodimer. Requires FAD as cofactor.

The enzyme catalyses Hg + NADP(+) + H(+) = Hg(2+) + NADPH. Resistance to Hg(2+) in bacteria appears to be governed by a specialized system which includes mercuric reductase. MerA protein is responsible for volatilizing mercury as Hg(0). The polypeptide is Mercuric reductase (merA) (Shigella flexneri).